The sequence spans 429 residues: UDP-N-acetylglucosamine 1-carboxyvinyltransferase (429 aa).

22–23 (KN) is a binding site for phosphoenolpyruvate. R102 lines the UDP-N-acetyl-alpha-D-glucosamine pocket. C126 functions as the Proton donor in the catalytic mechanism. Residue C126 is modified to 2-(S-cysteinyl)pyruvic acid O-phosphothioketal. Residues 131–135 (RPVDL), D316, and I338 contribute to the UDP-N-acetyl-alpha-D-glucosamine site.

Belongs to the EPSP synthase family. MurA subfamily.

The protein resides in the cytoplasm. The enzyme catalyses phosphoenolpyruvate + UDP-N-acetyl-alpha-D-glucosamine = UDP-N-acetyl-3-O-(1-carboxyvinyl)-alpha-D-glucosamine + phosphate. Its pathway is cell wall biogenesis; peptidoglycan biosynthesis. In terms of biological role, cell wall formation. Adds enolpyruvyl to UDP-N-acetylglucosamine. The sequence is that of UDP-N-acetylglucosamine 1-carboxyvinyltransferase from Rhodopseudomonas palustris (strain BisB18).